Consider the following 136-residue polypeptide: Glutamate mutase sigma subunit (136 aa).

Residues 3 to 136 (KKKIVIGVIG…IIDLKKDFKI (134 aa)) form the B12-binding domain. Residues 13-17 (SDCHT), His16, and 61-63 (SSI) each bind adenosylcob(III)alamin.

The protein belongs to the methylaspartate mutase GlmS subunit family. As to quaternary structure, heterotetramer composed of 2 epsilon subunits (GlmE) and 2 sigma subunits (GlmS). GlmE exists as a homodimer and GlmS as a monomer. It depends on adenosylcob(III)alamin as a cofactor.

The enzyme catalyses (2S,3S)-3-methyl-L-aspartate = L-glutamate. It participates in amino-acid degradation; L-glutamate degradation via mesaconate pathway; acetate and pyruvate from L-glutamate: step 1/4. Catalyzes the carbon skeleton rearrangement of L-glutamate to L-threo-3-methylaspartate ((2S,3S)-3-methylaspartate). The chain is Glutamate mutase sigma subunit from Fusobacterium nucleatum subsp. nucleatum (strain ATCC 25586 / DSM 15643 / BCRC 10681 / CIP 101130 / JCM 8532 / KCTC 2640 / LMG 13131 / VPI 4355).